The following is a 303-amino-acid chain: N-acetylmuramic acid 6-phosphate etherase (303 aa).

The SIS domain maps to A60–K223. E88 serves as the catalytic Proton donor. Residue E119 is part of the active site.

It belongs to the GCKR-like family. MurNAc-6-P etherase subfamily. In terms of assembly, homodimer.

It catalyses the reaction N-acetyl-D-muramate 6-phosphate + H2O = N-acetyl-D-glucosamine 6-phosphate + (R)-lactate. It participates in amino-sugar metabolism; 1,6-anhydro-N-acetylmuramate degradation. The protein operates within amino-sugar metabolism; N-acetylmuramate degradation. Its pathway is cell wall biogenesis; peptidoglycan recycling. Its function is as follows. Specifically catalyzes the cleavage of the D-lactyl ether substituent of MurNAc 6-phosphate, producing GlcNAc 6-phosphate and D-lactate. Together with AnmK, is also required for the utilization of anhydro-N-acetylmuramic acid (anhMurNAc) either imported from the medium or derived from its own cell wall murein, and thus plays a role in cell wall recycling. The polypeptide is N-acetylmuramic acid 6-phosphate etherase (Pectobacterium atrosepticum (strain SCRI 1043 / ATCC BAA-672) (Erwinia carotovora subsp. atroseptica)).